The chain runs to 126 residues: Aspartate 1-decarboxylase (126 aa).

Catalysis depends on serine 25, which acts as the Schiff-base intermediate with substrate; via pyruvic acid. Residue serine 25 is modified to Pyruvic acid (Ser). Threonine 57 is a substrate binding site. Tyrosine 58 functions as the Proton donor in the catalytic mechanism. 73–75 (GAA) is a substrate binding site.

The protein belongs to the PanD family. In terms of assembly, heterooctamer of four alpha and four beta subunits. Pyruvate is required as a cofactor. In terms of processing, is synthesized initially as an inactive proenzyme, which is activated by self-cleavage at a specific serine bond to produce a beta-subunit with a hydroxyl group at its C-terminus and an alpha-subunit with a pyruvoyl group at its N-terminus.

The protein resides in the cytoplasm. It carries out the reaction L-aspartate + H(+) = beta-alanine + CO2. It functions in the pathway cofactor biosynthesis; (R)-pantothenate biosynthesis; beta-alanine from L-aspartate: step 1/1. Functionally, catalyzes the pyruvoyl-dependent decarboxylation of aspartate to produce beta-alanine. This is Aspartate 1-decarboxylase from Psychromonas ingrahamii (strain DSM 17664 / CCUG 51855 / 37).